A 219-amino-acid chain; its full sequence is Proteasome subunit beta (219 aa).

Positions 1–14 (MISGSEYHKEYMKG) are cleaved as a propeptide — removed in mature form; by autocatalysis. Thr15 (nucleophile) is an active-site residue.

The protein belongs to the peptidase T1B family. The 20S proteasome core is composed of 14 alpha and 14 beta subunits that assemble into four stacked heptameric rings, resulting in a barrel-shaped structure. The two inner rings, each composed of seven catalytic beta subunits, are sandwiched by two outer rings, each composed of seven alpha subunits. The catalytic chamber with the active sites is on the inside of the barrel. Has a gated structure, the ends of the cylinder being occluded by the N-termini of the alpha-subunits. Is capped at one or both ends by the proteasome regulatory ATPase, PAN.

It localises to the cytoplasm. It carries out the reaction Cleavage of peptide bonds with very broad specificity.. With respect to regulation, the formation of the proteasomal ATPase PAN-20S proteasome complex, via the docking of the C-termini of PAN into the intersubunit pockets in the alpha-rings, triggers opening of the gate for substrate entry. Interconversion between the open-gate and close-gate conformations leads to a dynamic regulation of the 20S proteasome proteolysis activity. Component of the proteasome core, a large protease complex with broad specificity involved in protein degradation. This Methanococcus vannielii (strain ATCC 35089 / DSM 1224 / JCM 13029 / OCM 148 / SB) protein is Proteasome subunit beta.